Reading from the N-terminus, the 485-residue chain is Glutamyl-tRNA(Gln) amidotransferase subunit A (485 aa).

Residues lysine 78 and serine 153 each act as charge relay system in the active site. Serine 177 functions as the Acyl-ester intermediate in the catalytic mechanism.

Belongs to the amidase family. GatA subfamily. Heterotrimer of A, B and C subunits.

It carries out the reaction L-glutamyl-tRNA(Gln) + L-glutamine + ATP + H2O = L-glutaminyl-tRNA(Gln) + L-glutamate + ADP + phosphate + H(+). Functionally, allows the formation of correctly charged Gln-tRNA(Gln) through the transamidation of misacylated Glu-tRNA(Gln) in organisms which lack glutaminyl-tRNA synthetase. The reaction takes place in the presence of glutamine and ATP through an activated gamma-phospho-Glu-tRNA(Gln). The chain is Glutamyl-tRNA(Gln) amidotransferase subunit A from Bacillus mycoides (strain KBAB4) (Bacillus weihenstephanensis).